The sequence spans 723 residues: PX domain-containing protein EREL1 (723 aa).

Basic residues predominate over residues 1–12 (MMQRRSPPKHRH). The interval 1–26 (MMQRRSPPKHRHDGTSPLPLGMDWSP) is disordered. Residues 48–165 (YCVTIPSWIV…SFLELEAAAR (118 aa)) enclose the PX domain. Disordered regions lie at residues 169–193 (QDVDQNASDSNNDRSSTSSSPMVHP) and 209–230 (YGSDTAYETSEVGSPSVGQDDI). A compositionally biased stretch (low complexity) spans 172–193 (DQNASDSNNDRSSTSSSPMVHP). The span at 209–225 (YGSDTAYETSEVGSPSV) shows a compositional bias: polar residues. Coiled-coil stretches lie at residues 401-474 (NERL…LRQK) and 503-555 (KHVL…LEKE). The disordered stretch occupies residues 698–723 (DVKTTEDVNEENSDEKDEASRETLKR). A compositionally biased stretch (acidic residues) spans 704-714 (DVNEENSDEKD).

It localises to the cytoplasm. The protein resides in the cytosol. Its subcellular location is the endosome membrane. Its function is as follows. Acts as an effector of RABF2A and RABF2B. Involved in vacuolar transport of storage proteins. Regulates membrane trafficking to protein storage vacuoles (PSVs). Binds specifically to phosphatidylinositol 3-monophosphate (PtdIns3P). In Arabidopsis thaliana (Mouse-ear cress), this protein is PX domain-containing protein EREL1.